The primary structure comprises 431 residues: Tol-Pal system protein TolB (431 aa).

The first 26 residues, 1–26 (MSLMTKLGFRALVASCLITAGSAANA), serve as a signal peptide directing secretion. The disordered stretch occupies residues 406–431 (DGSAPPQILSVQGGSVREPSWGPFMQ).

This sequence belongs to the TolB family. In terms of assembly, the Tol-Pal system is composed of five core proteins: the inner membrane proteins TolA, TolQ and TolR, the periplasmic protein TolB and the outer membrane protein Pal. They form a network linking the inner and outer membranes and the peptidoglycan layer.

The protein resides in the periplasm. In terms of biological role, part of the Tol-Pal system, which plays a role in outer membrane invagination during cell division and is important for maintaining outer membrane integrity. In Burkholderia orbicola (strain AU 1054), this protein is Tol-Pal system protein TolB.